Reading from the N-terminus, the 325-residue chain is 6-phosphogluconolactonase 3, chloroplastic (325 aa).

Residues 1–68 (MASSSCFLRS…KSSDTRRKVK (68 aa)) constitute a chloroplast transit peptide. The disordered stretch occupies residues 51-73 (SIGTGSTKKSSDTRRKVKSMATT). A Microbody targeting signal motif is present at residues 323–325 (SKL).

The protein belongs to the glucosamine/galactosamine-6-phosphate isomerase family. 6-phosphogluconolactonase subfamily. Interacts with TRXM2. In terms of tissue distribution, expressed in roots, leaves and shoots.

The protein localises to the plastid. It is found in the chloroplast. Its subcellular location is the peroxisome. It catalyses the reaction 6-phospho-D-glucono-1,5-lactone + H2O = 6-phospho-D-gluconate + H(+). It functions in the pathway carbohydrate degradation; pentose phosphate pathway; D-ribulose 5-phosphate from D-glucose 6-phosphate (oxidative stage): step 2/3. Functionally, catalyzes the hydrolysis of 6-phosphogluconolactone to 6-phosphogluconate. Involved in the regulation of cellular redox state; enzymatic activity is required for this function. Required for sugar-dependent expression of nitrate assimilation genes in the nucleus of root cells. The protein is 6-phosphogluconolactonase 3, chloroplastic of Arabidopsis thaliana (Mouse-ear cress).